Consider the following 549-residue polypeptide: Fas-activated serine/threonine kinase (549 aa).

The segment at 1–30 (MRRPRGEPGPRAPRPTEGATCAGPGESWSP) is disordered. Positions 477-535 (VVLVLRERWHFCRDGRVLLGSRALRERHLGLMGYQLLPLPFEELESQRGLPQLKSYLRQ) constitute an RAP domain.

It belongs to the FAST protein kinase family. As to quaternary structure, interacts with TIA1; the interactions leads to TIA1 phosphorylation. Interacts with TIAR. Autophosphorylated on serine/threonine residues. Activated by dephosphorylation. In terms of tissue distribution, expressed in heart, brain, placenta, lung, liver, skeletal muscle, kidney and pancreas.

Its subcellular location is the mitochondrion matrix. The enzyme catalyses L-seryl-[Fas-activated protein] + ATP = O-phospho-L-seryl-[Fas-activated protein] + ADP + H(+). It carries out the reaction L-threonyl-[Fas-activated protein] + ATP = O-phospho-L-threonyl-[Fas-activated protein] + ADP + H(+). The catalysed reaction is L-seryl-[protein] + ATP = O-phospho-L-seryl-[protein] + ADP + H(+). It catalyses the reaction L-threonyl-[protein] + ATP = O-phospho-L-threonyl-[protein] + ADP + H(+). Functionally, phosphorylates the splicing regulator TIA1, thereby promoting the inclusion of FAS exon 6, which leads to an mRNA encoding a pro-apoptotic form of the receptor. Required for the biogenesis of some mitochondrial-encoded mRNAs, specifically stabilizes ND6 (NADH dehydrogenase complex subunit 6) mRNA, and regulates its levels. The polypeptide is Fas-activated serine/threonine kinase (FASTK) (Homo sapiens (Human)).